The sequence spans 511 residues: Cytochrome P450 monooxygenase nodR (511 aa).

The helical transmembrane segment at 8–28 threads the bilayer; that stretch reads ILFPISWEQSPIFLAVGLIFA. 2 N-linked (GlcNAc...) asparagine glycosylation sites follow: asparagine 76 and asparagine 373. Cysteine 452 contributes to the heme binding site.

It belongs to the cytochrome P450 family. The cofactor is heme.

Its subcellular location is the membrane. The protein operates within secondary metabolite biosynthesis. Its function is as follows. Cytochrome P450 monooxygenase; part of the gene cluster that mediates the biosynthesis of the indole diterpenes nodulisporic acids (NA). Nodulisporic acid A (NAA) and its chemically modified derivatives are of particular significance because of their highly potent insecticidal activity against blood-feeding arthropods and lack of observable adverse effects on mammals, in particular the tremogenicity associated with the paspaline-derived IDTs is not observed. The geranylgeranyl diphosphate (GGPP) synthase ggs1, localized outside of the cluster, is proposed to catalyze the first step in nodulisporic acid biosynthesis via conversion of farnesyl pyrophosphate and isopentyl pyrophosphate into geranylgeranyl pyrophosphate (GGPP). Condensation of indole-3-glycerol phosphate with GGPP by the prenyl transferase nodC then forms 3-geranylgeranylindole (3-GGI). Epoxidation by the FAD-dependent monooxygenase nodM leads to a single-epoxidized-GGI that is substrate of the terpene cyclase nodB for cyclization to yield emindole SB. The terminal methyl carbon, C28, of emindole SB is then oxidized by the cytochrome P450 monooxygenase nodW to produce nodulisporic acid F (NAF), the pentacyclic core of NAA. NAF is converted to nodulisporic acid E (NAE) via prenylation. This step is probably performed by one of the indole diterpene prenyltransferases nodD1 or nodD2. Several oxidation steps performed by the FAD-linked oxidoreductase nodO and one of the cytochrome P450 monooxygenase nodR, nodX or nodZ further convert NAE to nodulisporic acid D (NAD). NAD is substrate of cytochrome P450 monooxygenase nodJ to produce the precursor of nodulisporic acid C (NAC), converted to NAC by one of the indole diterpene prenyltransferases nodD1 or nodD2. The FAD-dependent monooxygenase nodY2 then oxidizes NAC to nodulisporic acid B (NAB). Finally NAB is converted to NAA by one of the cytochrome P450 monooxygenases nodR, nodX or nodZ. This chain is Cytochrome P450 monooxygenase nodR, found in Hypoxylon pulicicidum.